A 214-amino-acid chain; its full sequence is Cell division protein DamX (214 aa).

2 stretches are compositionally biased toward polar residues: residues Gly1–Gln14 and Gln43–Pro53. Residues Gly1–Tyr133 form a disordered region. Residues Gly44–Ala65 traverse the membrane as a helical segment. Low complexity-rich tracts occupy residues Gln78–Lys97 and Ser110–Ser131. The SPOR domain occupies Ser127–Pro204.

Belongs to the DamX family.

Its subcellular location is the cell inner membrane. Functionally, non-essential cell division protein. The sequence is that of Cell division protein DamX from Serratia marcescens.